A 610-amino-acid chain; its full sequence is Elongation factor 4 (610 aa).

One can recognise a tr-type G domain in the interval 13-195; the sequence is SHIRNFSIVA…AIVHKLPAPK (183 aa). Residues 25–30 and 142–145 contribute to the GTP site; these read DHGKST and NKID.

The protein belongs to the TRAFAC class translation factor GTPase superfamily. Classic translation factor GTPase family. LepA subfamily.

Its subcellular location is the cell inner membrane. The enzyme catalyses GTP + H2O = GDP + phosphate + H(+). Required for accurate and efficient protein synthesis under certain stress conditions. May act as a fidelity factor of the translation reaction, by catalyzing a one-codon backward translocation of tRNAs on improperly translocated ribosomes. Back-translocation proceeds from a post-translocation (POST) complex to a pre-translocation (PRE) complex, thus giving elongation factor G a second chance to translocate the tRNAs correctly. Binds to ribosomes in a GTP-dependent manner. The polypeptide is Elongation factor 4 (Rhizobium etli (strain ATCC 51251 / DSM 11541 / JCM 21823 / NBRC 15573 / CFN 42)).